Reading from the N-terminus, the 257-residue chain is A-factor type gamma-butyrolactone 1'-reductase (1S-forming) (257 aa).

Tyrosine 161 (proton acceptor) is an active-site residue.

This sequence belongs to the short-chain dehydrogenases/reductases (SDR) family. As to quaternary structure, homodimer.

The catalysed reaction is a (3R,4R)-3-[(1S)-1-hydroxyalkyl]-4-(hydroxymethyl)oxolan-2-one + NADP(+) = a (3R,4R)-3-alkanoyl-4-(hydroxymethyl)oxolan-2-one + NADPH + H(+). Involved in the biosynthesis of virginiae butanolide (VB), which regulates the production of antibiotic virginiamycin. Catalyzes the reduction of 6-dehydro-VB-A to VB-A, the last catalytic step in VB biosynthesis. In vitro, can use various synthetic A-factor-type analogs. This Streptomyces virginiae (Streptomyces cinnamonensis) protein is A-factor type gamma-butyrolactone 1'-reductase (1S-forming).